Here is a 632-residue protein sequence, read N- to C-terminus: U-box domain-containing protein 14 (632 aa).

The U-box domain occupies Val247–Glu321. 5 ARM repeats span residues Val377–Ile416, Glu418–Val457, Asp459–Ile498, Gln500–Thr539, and Gln541–Ile580.

As to quaternary structure, homodimer. Interacts with SNL1. Binds to SD11, SD16, SD17, SD18, SD113, SD129 and SD25. Expressed in flowers, green siliques, seeds and rosette leaves.

It carries out the reaction S-ubiquitinyl-[E2 ubiquitin-conjugating enzyme]-L-cysteine + [acceptor protein]-L-lysine = [E2 ubiquitin-conjugating enzyme]-L-cysteine + N(6)-ubiquitinyl-[acceptor protein]-L-lysine.. It functions in the pathway protein modification; protein ubiquitination. Functionally, functions as an E3 ubiquitin ligase with specific E2 ubiquitin-conjugating enzymes. Undergoes auto-ubiquitination. This is U-box domain-containing protein 14 (PUB14) from Arabidopsis thaliana (Mouse-ear cress).